We begin with the raw amino-acid sequence, 363 residues long: UDP-N-acetylglucosamine--N-acetylmuramyl-(pentapeptide) pyrophosphoryl-undecaprenol N-acetylglucosamine transferase (363 aa).

UDP-N-acetyl-alpha-D-glucosamine contacts are provided by residues 14–16, Asn122, Arg163, Ser190, and Gln285; that span reads TGG.

Belongs to the glycosyltransferase 28 family. MurG subfamily.

It is found in the cell inner membrane. It carries out the reaction di-trans,octa-cis-undecaprenyl diphospho-N-acetyl-alpha-D-muramoyl-L-alanyl-D-glutamyl-meso-2,6-diaminopimeloyl-D-alanyl-D-alanine + UDP-N-acetyl-alpha-D-glucosamine = di-trans,octa-cis-undecaprenyl diphospho-[N-acetyl-alpha-D-glucosaminyl-(1-&gt;4)]-N-acetyl-alpha-D-muramoyl-L-alanyl-D-glutamyl-meso-2,6-diaminopimeloyl-D-alanyl-D-alanine + UDP + H(+). Its pathway is cell wall biogenesis; peptidoglycan biosynthesis. Its function is as follows. Cell wall formation. Catalyzes the transfer of a GlcNAc subunit on undecaprenyl-pyrophosphoryl-MurNAc-pentapeptide (lipid intermediate I) to form undecaprenyl-pyrophosphoryl-MurNAc-(pentapeptide)GlcNAc (lipid intermediate II). In Prochlorococcus marinus (strain MIT 9301), this protein is UDP-N-acetylglucosamine--N-acetylmuramyl-(pentapeptide) pyrophosphoryl-undecaprenol N-acetylglucosamine transferase.